Here is a 569-residue protein sequence, read N- to C-terminus: Urease subunit alpha (569 aa).

In terms of domain architecture, Urease spans 131-569 (GGIDTHIHFI…LPLAQRYLLL (439 aa)). Ni(2+) is bound by residues H136, H138, and K219. The residue at position 219 (K219) is an N6-carboxylysine. Residue H221 coordinates substrate. Ni(2+) is bound by residues H248 and H274. H322 (proton donor) is an active-site residue. A Ni(2+)-binding site is contributed by D362.

The protein belongs to the metallo-dependent hydrolases superfamily. Urease alpha subunit family. As to quaternary structure, heterotrimer of UreA (gamma), UreB (beta) and UreC (alpha) subunits. Three heterotrimers associate to form the active enzyme. Ni cation is required as a cofactor. In terms of processing, carboxylation allows a single lysine to coordinate two nickel ions.

The protein localises to the cytoplasm. The catalysed reaction is urea + 2 H2O + H(+) = hydrogencarbonate + 2 NH4(+). It functions in the pathway nitrogen metabolism; urea degradation; CO(2) and NH(3) from urea (urease route): step 1/1. The chain is Urease subunit alpha from Synechococcus sp. (strain WH7805).